The chain runs to 223 residues: Ribonuclease S-2 (223 aa).

An N-terminal signal peptide occupies residues methionine 1 to glycine 22. Cysteine 38 and cysteine 44 form a disulfide bridge. Asparagine 51 is a glycosylation site (N-linked (GlcNAc...) asparagine). Histidine 55 functions as the Proton donor in the catalytic mechanism. RNA contacts are provided by residues histidine 55 and glutamine 94–leucine 95. 3 disulfides stabilise this stretch: cysteine 71-cysteine 119, cysteine 178-cysteine 211, and cysteine 194-cysteine 205. Residue glutamine 112 is part of the active site. Lysine 115–histidine 116 contributes to the RNA binding site. Histidine 116 serves as the catalytic Proton acceptor.

The protein belongs to the RNase T2 family. Pistil.

It localises to the secreted. It is found in the extracellular space. The catalysed reaction is a ribonucleotidyl-ribonucleotide-RNA + H2O = a 3'-end 3'-phospho-ribonucleotide-RNA + a 5'-end dephospho-ribonucleoside-RNA + H(+). Functionally, self-incompatibility (SI) is the inherited ability of a flowering plant to prevent self-fertilization by discriminating between self and non-self pollen during pollination. In many species of the Solanaceae, self-incompatibility is controlled by the single, multiallelic locus S. This stylar glycoprotein is associated with expression of self-incompatibility in potato. The polypeptide is Ribonuclease S-2 (Solanum tuberosum (Potato)).